Reading from the N-terminus, the 445-residue chain is MSVILEHLPTGQKVGIAFSGGLDTSAALHWMKQKGALPYAYTANLGQPDETDYEAIPRKALEYGAEIARLIDCREPLVREGIAALQSGAFHITTAGVTYFNTTPIGRAVTGTMLVTAMKEDDVNIWGDGSTFKGNDIERFYRYGLLVNPDLKVYKPWLDSAFIDELGGRAEMSEFLQKSGFDYKMSAEKAYSTDSNILGATHEAKDLELLSSSIRIVQPIMGVAFWRDDVAVKAEEVTVRFEEGFPVALNGTTYADPVELMLEANRIGGRHGLGMSDQIENRIIEAKSRGIYEAPGMALLFAAYERLITGIHNEDTIEQYHENGRKLGRLLYQGRWFDSQAIMLRESAQRWVARPITGEVTLELRRGNDYSILNTDSPNLTFKPERLTMEKGESTFSPRDRIGQLTMRNLDITDTREKLLTYAKSGLITLSHGSELPKLNSGEKN.

ATP-binding positions include 17-25 and Ala43; that span reads AFSGGLDTS. Tyr99 contacts L-citrulline. Residues Gly129 and Thr131 each contribute to the ATP site. The L-aspartate site is built by Thr131, Asn135, and Asp136. Asn135 provides a ligand contact to L-citrulline. Asp136 contributes to the ATP binding site. Positions 139 and 192 each coordinate L-citrulline. Asp194 provides a ligand contact to ATP. Thr201, Glu203, and Glu280 together coordinate L-citrulline.

Belongs to the argininosuccinate synthase family. Type 2 subfamily. Homotetramer.

It localises to the cytoplasm. It carries out the reaction L-citrulline + L-aspartate + ATP = 2-(N(omega)-L-arginino)succinate + AMP + diphosphate + H(+). It functions in the pathway amino-acid biosynthesis; L-arginine biosynthesis; L-arginine from L-ornithine and carbamoyl phosphate: step 2/3. In Acidobacterium capsulatum (strain ATCC 51196 / DSM 11244 / BCRC 80197 / JCM 7670 / NBRC 15755 / NCIMB 13165 / 161), this protein is Argininosuccinate synthase.